The primary structure comprises 341 residues: Glyceraldehyde-3-phosphate dehydrogenase, cytosolic (341 aa).

NAD(+) contacts are provided by residues 14–15 (RI) and D36. D-glyceraldehyde 3-phosphate contacts are provided by residues 153–155 (SCT), T184, 213–214 (TG), and R236. The active-site Nucleophile is C154. An NAD(+)-binding site is contributed by N318.

This sequence belongs to the glyceraldehyde-3-phosphate dehydrogenase family. In terms of assembly, homotetramer.

It localises to the cytoplasm. It catalyses the reaction D-glyceraldehyde 3-phosphate + phosphate + NAD(+) = (2R)-3-phospho-glyceroyl phosphate + NADH + H(+). It participates in carbohydrate degradation; glycolysis; pyruvate from D-glyceraldehyde 3-phosphate: step 1/5. Functionally, key enzyme in glycolysis that catalyzes the first step of the pathway by converting D-glyceraldehyde 3-phosphate (G3P) into 3-phospho-D-glyceroyl phosphate. Essential for the maintenance of cellular ATP levels and carbohydrate metabolism. The polypeptide is Glyceraldehyde-3-phosphate dehydrogenase, cytosolic (GAPC) (Chlamydomonas reinhardtii (Chlamydomonas smithii)).